The sequence spans 376 residues: Actin (376 aa).

It belongs to the actin family.

It localises to the cytoplasm. Its subcellular location is the cytoskeleton. The enzyme catalyses ATP + H2O = ADP + phosphate + H(+). Functionally, actins are highly conserved proteins that are involved in various types of cell motility and are ubiquitously expressed in all eukaryotic cells. This Trypanosoma cruzi protein is Actin.